Consider the following 370-residue polypeptide: Chaperone protein DnaJ (370 aa).

Residues 6–70 form the J domain; it reads DYYEVLGVQR…EKRSMYDRFG (65 aa). Residues 128–208 form a CR-type zinc finger; the sequence is GVEKTIEFRR…CRGEGRVRQT (81 aa). 8 residues coordinate Zn(2+): cysteine 141, cysteine 144, cysteine 158, cysteine 161, cysteine 182, cysteine 185, cysteine 196, and cysteine 199. 4 CXXCXGXG motif repeats span residues 141 to 148, 158 to 165, 182 to 189, and 196 to 203; these read CPACRGSG, CPKCGGLG, CDMCRGEG, and CRECRGEG.

Belongs to the DnaJ family. As to quaternary structure, homodimer. It depends on Zn(2+) as a cofactor.

The protein localises to the cytoplasm. Its function is as follows. Participates actively in the response to hyperosmotic and heat shock by preventing the aggregation of stress-denatured proteins and by disaggregating proteins, also in an autonomous, DnaK-independent fashion. Unfolded proteins bind initially to DnaJ; upon interaction with the DnaJ-bound protein, DnaK hydrolyzes its bound ATP, resulting in the formation of a stable complex. GrpE releases ADP from DnaK; ATP binding to DnaK triggers the release of the substrate protein, thus completing the reaction cycle. Several rounds of ATP-dependent interactions between DnaJ, DnaK and GrpE are required for fully efficient folding. Also involved, together with DnaK and GrpE, in the DNA replication of plasmids through activation of initiation proteins. In Roseiflexus sp. (strain RS-1), this protein is Chaperone protein DnaJ.